The following is a 216-amino-acid chain: Probable nicotinate-nucleotide adenylyltransferase (216 aa).

It belongs to the NadD family.

It catalyses the reaction nicotinate beta-D-ribonucleotide + ATP + H(+) = deamido-NAD(+) + diphosphate. The protein operates within cofactor biosynthesis; NAD(+) biosynthesis; deamido-NAD(+) from nicotinate D-ribonucleotide: step 1/1. In terms of biological role, catalyzes the reversible adenylation of nicotinate mononucleotide (NaMN) to nicotinic acid adenine dinucleotide (NaAD). The sequence is that of Probable nicotinate-nucleotide adenylyltransferase from Marinobacter nauticus (strain ATCC 700491 / DSM 11845 / VT8) (Marinobacter aquaeolei).